The following is a 393-amino-acid chain: Reticulon-like protein 2 (393 aa).

The span at 1-21 (MNRNTTTNKNANLNNSRNANA) shows a compositional bias: low complexity. The segment at 1–25 (MNRNTTTNKNANLNNSRNANAPGEA) is disordered. Over 1 to 60 (MNRNTTTNKNANLNNSRNANAPGEAGHQNKTGLIYWTNPSKSGASFAATLVSLLILRNVN) the chain is Cytoplasmic. In terms of domain architecture, Reticulon spans 30–236 (KTGLIYWTNP…SISNENKSST (207 aa)). The helical transmembrane segment at 61–81 (VISVLLKIGYMVLFTSFAVEL) threads the bilayer. Topologically, residues 82-149 (STKVLFDKGV…IGVSLYFLHG (68 aa)) are lumenal. Asparagine 137 is a glycosylation site (N-linked (GlcNAc...) asparagine). A helical transmembrane segment spans residues 150-170 (LFAIFSMNTVLIMTTIFLYTV). The Cytoplasmic segment spans residues 171–393 (PLIYDRKQAR…HGLKQKLQHA (223 aa)). 2 disordered regions span residues 214–313 (IIPP…DVKT) and 339–393 (GDYN…LQHA). Positions 220-285 (DEGSYSTSIS…PVSQNENIGT (66 aa)) are enriched in polar residues. Serine 278 is modified (phosphoserine). The segment covering 289-313 (GKQEIPTEKDFNNRHENFSKPDVKT) has biased composition (basic and acidic residues). Residues 365 to 376 (PAESQSIPIKNN) are compositionally biased toward polar residues. Residues 381–393 (KTTHGLKQKLQHA) show a composition bias toward basic residues.

Its subcellular location is the endoplasmic reticulum membrane. This chain is Reticulon-like protein 2 (RTN2), found in Saccharomyces cerevisiae (strain ATCC 204508 / S288c) (Baker's yeast).